A 347-amino-acid polypeptide reads, in one-letter code: CRISPR-associated endonuclease Cas1 4 (347 aa).

Residues 1 to 21 show a composition bias toward basic and acidic residues; it reads MNIENEVHIENASESKREPKP. The disordered stretch occupies residues 1 to 25; sequence MNIENEVHIENASESKREPKPPEGL. Residues glutamate 176, histidine 241, and glutamate 256 each coordinate Mn(2+).

Belongs to the CRISPR-associated endonuclease Cas1 family. Homodimer, forms a heterotetramer with a Cas2 homodimer. It depends on Mg(2+) as a cofactor. The cofactor is Mn(2+).

CRISPR (clustered regularly interspaced short palindromic repeat), is an adaptive immune system that provides protection against mobile genetic elements (viruses, transposable elements and conjugative plasmids). CRISPR clusters contain spacers, sequences complementary to antecedent mobile elements, and target invading nucleic acids. CRISPR clusters are transcribed and processed into CRISPR RNA (crRNA). Acts as a dsDNA endonuclease. Involved in the integration of spacer DNA into the CRISPR cassette. In Methanospirillum hungatei JF-1 (strain ATCC 27890 / DSM 864 / NBRC 100397 / JF-1), this protein is CRISPR-associated endonuclease Cas1 4.